We begin with the raw amino-acid sequence, 1493 residues long: Sister chromatid cohesion protein 2 (1493 aa).

Ser43 carries the phosphoserine; in mutant scc2-8A modification. Thr67 carries the phosphothreonine modification. Ser74 bears the Phosphoserine; in mutant scc2-8A mark. Phosphoserine is present on residues Ser127 and Ser157. The tract at residues 151–170 (SNAGNLSFNDNSSNKKTKTS) is disordered. Ser162 carries the post-translational modification Phosphoserine; in mutant scc2-8A. The residue at position 163 (Ser163) is a Phosphoserine. Thr231 and Thr236 each carry phosphothreonine. 2 positions are modified to phosphoserine: Ser305 and Ser320. Thr360 is modified (phosphothreonine; in mutant scc2-8A). 4 HEAT repeats span residues 695 to 732 (NLYD…KDKV), 734 to 771 (LSNP…YFEF), 806 to 843 (TKVY…KVHE), and 1132 to 1169 (FNSR…LEER). Ser753 is subject to Phosphoserine. Position 1179 is a phosphoserine; in mutant scc2-8A (Ser1179). Ser1182 bears the Phosphoserine mark. Ser1183 is subject to Phosphoserine; in mutant scc2-8A. A Phosphoserine modification is found at Ser1185. The HEAT 5 repeat unit spans residues 1244 to 1281 (TNPSHSIPTVIALFASTSQYIRHVAYELLEDLFEKYET).

It belongs to the SCC2/Nipped-B family. As to quaternary structure, interacts with SCC4. Interacts with the cohesin complex, which is composed of: the SMC1 and SMC3 heterodimer attached via their hinge domain, MCD1/SCC1 which link them, and IRR1/SCC3, which interacts with MCD1. Post-translationally, phosphorylated at alternative sites Ser-43, Ser-74, Ser-162, Thr-360, Ser-1179 and Ser-1183 when the principal phosphorylation sites Thr-67, Ser-127, Ser-157, Ser-163, Thr-231, Thr-236, Ser-305 and Ser-320 are mutated to alanines.

It is found in the nucleus. The protein localises to the chromosome. The protein resides in the centromere. In terms of biological role, plays a structural role in chromatin and is involved in sister chromatid cohesion. Forms a complex with SCC4 required for the stable association of the cohesin complex with chromatin, which may act by hydrolyzing ATP from SMC1 and SMC3 heads. Binds to the nucleosome-free promoter regions of ribosomal protein genes and tRNA genes. Involved in transcriptional regulation by cooperating with the RSC complex to maintain nucleosome exhaustion at its binding sites. The sequence is that of Sister chromatid cohesion protein 2 (SCC2) from Saccharomyces cerevisiae (strain ATCC 204508 / S288c) (Baker's yeast).